The sequence spans 663 residues: UvrABC system protein B (663 aa).

A Helicase ATP-binding domain is found at 31–418 (DNIEGGEKAQ…TDTVVEQIIR (388 aa)). Residue 44-51 (GATGTGKT) participates in ATP binding. The Beta-hairpin motif lies at 97 to 120 (YYDYYQPEAYVPSSDTYIEKDSSV). The region spanning 435-601 (QMDDLLGEIN…TIKKEIRDLI (167 aa)) is the Helicase C-terminal domain. Positions 627–662 (QAEIKALQKQMQEAAELLDFELAAQIRDVILKLKAI) constitute a UVR domain.

The protein belongs to the UvrB family. Forms a heterotetramer with UvrA during the search for lesions. Interacts with UvrC in an incision complex.

It localises to the cytoplasm. Functionally, the UvrABC repair system catalyzes the recognition and processing of DNA lesions. A damage recognition complex composed of 2 UvrA and 2 UvrB subunits scans DNA for abnormalities. Upon binding of the UvrA(2)B(2) complex to a putative damaged site, the DNA wraps around one UvrB monomer. DNA wrap is dependent on ATP binding by UvrB and probably causes local melting of the DNA helix, facilitating insertion of UvrB beta-hairpin between the DNA strands. Then UvrB probes one DNA strand for the presence of a lesion. If a lesion is found the UvrA subunits dissociate and the UvrB-DNA preincision complex is formed. This complex is subsequently bound by UvrC and the second UvrB is released. If no lesion is found, the DNA wraps around the other UvrB subunit that will check the other stand for damage. This chain is UvrABC system protein B, found in Streptococcus agalactiae serotype Ia (strain ATCC 27591 / A909 / CDC SS700).